The primary structure comprises 132 residues: Damage-regulated import facilitator 1 (132 aa).

Disordered stretches follow at residues 1-41 (MDAQ…LMTV) and 108-132 (SLEKWDVAEPAAEHEAMVNGSKRRL). Low complexity predominate over residues 16 to 31 (QLQQQQQQEQQQQQQQ). A compositionally biased stretch (basic and acidic residues) spans 108–123 (SLEKWDVAEPAAEHEA).

It belongs to the DIF1/spd1 family. Interacts with RNR2 and RNR4. In terms of processing, phosphorylated by DUN1 in response to DNA damage which leads to its degradation.

The protein localises to the cytoplasm. It is found in the nucleus. Mediates the nuclear localization of RNR2 and RNR4, 2 subunits of the ribonucleotide reductase. The protein is Damage-regulated import facilitator 1 (DIF1) of Saccharomyces cerevisiae (strain JAY291) (Baker's yeast).